The sequence spans 506 residues: Cytochrome P450 6a2 (506 aa).

Cys451 is a binding site for heme.

This sequence belongs to the cytochrome P450 family. Heme is required as a cofactor.

It localises to the endoplasmic reticulum membrane. It is found in the microsome membrane. In terms of biological role, is involved in the breakdown of synthetic insecticides and may be involved in the metabolism of insect hormones. The sequence is that of Cytochrome P450 6a2 (Cyp6a2) from Drosophila melanogaster (Fruit fly).